The primary structure comprises 1481 residues: ABC-type transporter braE (1481 aa).

Transmembrane regions (helical) follow at residues 27-47 (FTVK…FILA), 86-106 (LILI…SSAL), 130-150 (IFLS…ARTY), 159-179 (EIAF…MLLL), 269-289 (LYVP…SFFC), and 308-328 (PANI…VIAI). One can recognise an ABC transmembrane type-1 1 domain in the interval 281–549 (LAAIGSFFCQ…LLETLPQMAA (269 aa)). The N-linked (GlcNAc...) asparagine glycan is linked to N367. Helical transmembrane passes span 389–409 (ELWG…NLLG), 410–430 (VAFI…SFFM), and 491–511 (LMLT…PITF). The 230-residue stretch at 594–823 (VAIKDGSFGW…QSYIHSLGVK (230 aa)) folds into the ABC transporter 1 domain. 627 to 634 (GPIASGKS) lines the ATP pocket. 2 N-linked (GlcNAc...) asparagine glycosylation sites follow: N671 and N813. Helical transmembrane passes span 887 to 907 (IAIF…TIWL), 928 to 948 (AIYA…GVLL), 1001 to 1021 (SALL…AVIA), 1026 to 1046 (YLAI…KFYL), 1111 to 1131 (LHFV…SLAV), and 1144 to 1164 (LVTL…YTAL). Positions 887–1166 (IAIFTSGLLY…VVIYYTALET (280 aa)) constitute an ABC transmembrane type-1 2 domain. N1207 and N1232 each carry an N-linked (GlcNAc...) asparagine glycan. One can recognise an ABC transporter 2 domain in the interval 1224 to 1477 (LTTNELSSND…PGTRFGELWS (254 aa)). 1260 to 1267 (GRTGSGKS) is a binding site for ATP. N-linked (GlcNAc...) asparagine glycosylation is found at N1330 and N1364.

Belongs to the ABC transporter superfamily. ABCC family. Conjugate transporter (TC 3.A.1.208) subfamily.

It localises to the membrane. Functionally, ABC-type transporter; part of the gene cluster that mediates the biosynthesis of the brasilane terpene glycosides brasilane D and E. The chain is ABC-type transporter braE from Annulohypoxylon truncatum (Hypoxylon truncatum).